We begin with the raw amino-acid sequence, 275 residues long: 3-oxo-isoapionate decarboxylase (275 aa).

The enzyme catalyses 3-oxoisoapionate + H(+) = L-erythrulose + CO2. Its pathway is carbohydrate metabolism. Its function is as follows. Involved in catabolism of D-apiose. Catalyzes decarboxylation of 3-oxo-isoapionate to L-erythrulose. This Pectobacterium atrosepticum (strain SCRI 1043 / ATCC BAA-672) (Erwinia carotovora subsp. atroseptica) protein is 3-oxo-isoapionate decarboxylase.